A 701-amino-acid polypeptide reads, in one-letter code: SH3 domain-binding protein 1 (701 aa).

A compositionally biased stretch (basic residues) spans 1–10; it reads MMKRQLHRMR. Disordered regions lie at residues 1–23 and 160–182; these read MMKR…RTPE and SQAT…HSHT. Residues 1 to 275 are interaction with CGNL1; sequence MMKRQLHRMR…TATHFPRVYG (275 aa). Residues 17 to 262 enclose the BAR domain; sequence SLGRTPETAE…RENHGQADHS (246 aa). Residues serine 175, serine 241, serine 262, and serine 264 each carry the phosphoserine modification. A Rho-GAP domain is found at 276–469; that stretch reads VSLATHLQEL…ALIQSADTLF (194 aa). Positions 470 to 701 are interaction with CD2AP; sequence PGDINFNVSG…RPRSLASETN (232 aa). The interval 496-701 is disordered; the sequence is SEELPSTAVP…RPRSLASETN (206 aa). The segment covering 508-522 has biased composition (pro residues); it reads ATTPAPAPAPAPAPA. Residues serine 544 and serine 550 each carry the phosphoserine modification. 2 stretches are compositionally biased toward pro residues: residues 570–579 and 587–596; these read PARPTMPPPQ and PPAPPLPPGS. Threonine 601 carries the post-translational modification Phosphothreonine. The SH3-binding motif lies at 616-625; the sequence is APTVPPPLPP. 2 stretches are compositionally biased toward pro residues: residues 618–630 and 641–652; these read TVPP…PPQP and SPSPASPGPASP. At threonine 626 the chain carries Phosphothreonine. A Phosphoserine modification is found at serine 653. Residues 666–677 show a composition bias toward low complexity; that stretch reads GAATAEGGAPEA. A compositionally biased stretch (pro residues) spans 682–692; the sequence is PTPPAIPPQPR.

In terms of assembly, interacts with RAC1. Interacts with the exocyst via EXOC4 and EXOC8; required for the localization of both SH3BP1 and the exocyst to the leading edge of migrating cells. Interacts with CD2AP and CGNL1; probably part of a complex at cell junctions. Interacts with CAPZA1; recruits CAPZA1 to forming cell junctions. May interact with AFDN. Interacts with PLXND1; they dissociate upon SEMA3E binding to PLXND1 allowing SH3BP1 to transduce downstream signal through RAC1 inactivation. Interacts with ABL1, GRB2 and SRC (via SH3 domain).

Its subcellular location is the cell projection. The protein localises to the cell junction. The protein resides in the tight junction. It localises to the adherens junction. It is found in the phagocytic cup. Its subcellular location is the nucleus. The protein localises to the cytoplasm. The protein resides in the cytosol. In terms of biological role, GTPase activating protein (GAP) which specifically converts GTP-bound Rho-type GTPases including RAC1 and CDC42 in their inactive GDP-bound form. By specifically inactivating RAC1 at the leading edge of migrating cells, it regulates the spatiotemporal organization of cell protrusions which is important for proper cell migration. Also negatively regulates CDC42 in the process of actin remodeling and the formation of epithelial cell junctions. Through its GAP activity toward RAC1 and/or CDC42 plays a specific role in phagocytosis of large particles. Specifically recruited by a PI3 kinase/PI3K-dependent mechanism to sites of large particles engagement, inactivates RAC1 and/or CDC42 allowing the reorganization of the underlying actin cytoskeleton required for engulfment. It also plays a role in angiogenesis and the process of repulsive guidance as part of a semaphorin-plexin signaling pathway. Following the binding of PLXND1 to extracellular SEMA3E it dissociates from PLXND1 and inactivates RAC1, inducing the intracellular reorganization of the actin cytoskeleton and the collapse of cells. This is SH3 domain-binding protein 1 from Homo sapiens (Human).